The chain runs to 285 residues: ATP phosphoribosyltransferase (285 aa).

Belongs to the ATP phosphoribosyltransferase family. Long subfamily. The cofactor is Mg(2+).

It localises to the cytoplasm. The enzyme catalyses 1-(5-phospho-beta-D-ribosyl)-ATP + diphosphate = 5-phospho-alpha-D-ribose 1-diphosphate + ATP. It functions in the pathway amino-acid biosynthesis; L-histidine biosynthesis; L-histidine from 5-phospho-alpha-D-ribose 1-diphosphate: step 1/9. Feedback inhibited by histidine. Catalyzes the condensation of ATP and 5-phosphoribose 1-diphosphate to form N'-(5'-phosphoribosyl)-ATP (PR-ATP). Has a crucial role in the pathway because the rate of histidine biosynthesis seems to be controlled primarily by regulation of HisG enzymatic activity. This Streptomyces coelicolor (strain ATCC BAA-471 / A3(2) / M145) protein is ATP phosphoribosyltransferase.